Consider the following 84-residue polypeptide: Cytochrome b559 subunit alpha (84 aa).

A helical transmembrane segment spans residues 22 to 36; the sequence is IIHSITIPSLFVSGW. Position 24 (histidine 24) interacts with heme.

This sequence belongs to the PsbE/PsbF family. Heterodimer of an alpha subunit and a beta subunit. PSII is composed of 1 copy each of membrane proteins PsbA, PsbB, PsbC, PsbD, PsbE, PsbF, PsbH, PsbI, PsbJ, PsbK, PsbL, PsbM, PsbT, PsbX, PsbY, PsbZ, Psb30/Ycf12, at least 3 peripheral proteins of the oxygen-evolving complex and a large number of cofactors. It forms dimeric complexes. Heme b is required as a cofactor.

The protein localises to the plastid. Its subcellular location is the chloroplast thylakoid membrane. This b-type cytochrome is tightly associated with the reaction center of photosystem II (PSII). PSII is a light-driven water:plastoquinone oxidoreductase that uses light energy to abstract electrons from H(2)O, generating O(2) and a proton gradient subsequently used for ATP formation. It consists of a core antenna complex that captures photons, and an electron transfer chain that converts photonic excitation into a charge separation. This Phaeodactylum tricornutum (strain CCAP 1055/1) protein is Cytochrome b559 subunit alpha.